The following is a 279-amino-acid chain: MYVTPALLFLSAYLILPTLETVYLSFFDGRSRNFVGLKNYVFAFTDHTMLVAFRNNLLWLVLVTGISVSLGLIIAVLVDKVRYEAIAKSIIFLPMAISFVGASVIWKFVYAYRPAGAEQIGLLNAIVTSLGFAPVGWLVERSVNNFALIAIMIWLYTGFCMVILSAAVKGIPADVIEAARIDGANSWQIFWRITIPMIRSTLLVVSTTMVILVLKVFDIVFVMTGGNQGTEVIASLMIKEMFNYRNFGRGSTIAVILLLLIVPVMITNIRRFKAQEKLR.

A run of 7 helical transmembrane segments spans residues 7-27 (LLFLSAYLILPTLETVYLSFF), 58-78 (LWLVLVTGISVSLGLIIAVLV), 90-110 (IIFLPMAISFVGASVIWKFVY), 120-140 (IGLLNAIVTSLGFAPVGWLVE), 146-166 (FALIAIMIWLYTGFCMVILSA), 202-222 (LLVVSTTMVILVLKVFDIVFV), and 247-267 (FGRGSTIAVILLLLIVPVMIT). The ABC transmembrane type-1 domain occupies 53 to 270 (FRNNLLWLVL…IVPVMITNIR (218 aa)).

Belongs to the binding-protein-dependent transport system permease family. As to quaternary structure, the complex is composed of two ATP-binding proteins (GgtA), two transmembrane proteins (GgtC and GgtD) and a solute-binding protein (GgtB).

It is found in the cell membrane. Functionally, part of the ABC transporter complex GgtABCD involved in the uptake of the osmoprotective compounds glucosylglycerol (GG), sucrose and trehalose. Responsible for the translocation of the substrate across the membrane. This is Osmoprotective compounds uptake permease protein GgtC from Synechocystis sp. (strain ATCC 27184 / PCC 6803 / Kazusa).